Reading from the N-terminus, the 54-residue chain is Large ribosomal subunit protein bL33A (54 aa).

This sequence belongs to the bacterial ribosomal protein bL33 family.

This Streptomyces griseus subsp. griseus (strain JCM 4626 / CBS 651.72 / NBRC 13350 / KCC S-0626 / ISP 5235) protein is Large ribosomal subunit protein bL33A.